A 293-amino-acid polypeptide reads, in one-letter code: Dioxygenase cdmA (293 aa).

The Fe cation site is built by His-135, Asp-137, and His-212.

It belongs to the PhyH family. As to quaternary structure, homodimer. Requires Fe cation as cofactor.

It catalyses the reaction chrodrimanin C + 2-oxoglutarate + O2 = verruculide A + succinate + CO2 + H2O. The catalysed reaction is chrodrimanin H + 2-oxoglutarate + O2 = chrodrimanin E + succinate + CO2 + H2O. It functions in the pathway secondary metabolite biosynthesis; terpenoid biosynthesis. In terms of biological role, dioxygenase; part of the gene cluster that mediates the biosynthesis of chrodrimanin B, a meroterpenoid that acts as a potent blocker of insect GABA-gated chloride channels. The first step of the pathway is the biosynthesis of 6-hydroxymellein by the polyketide synthase cdmE. The prenyltransferase cdmH acts as a 6-hydroxymellein 5-farnesyltransferase and produces the hydrophobic metabolite verruculide C. The FAD-dependent monooxygenase cdmI further converts verruculide C into verruculide B. The terpene cyclase cdmG then produced the pentacyclic molecule 3-hydroxypentacecilide A, the backbone structure of chrodrimanin B, via folding the farnesyl moiety of the substrate into the chair-boat conformation. The short-chain dehydrogenase/reductase cdmF functions as the 3-OH dehydrogenase that oxidizes the C-3 hydroxyl group of 3-hydroxypentacecilide A and produces chrodrimanin C, the dehydrogenated product of 3-hydroxypentacecilide A. The cytochrome P450 monooxygenase cdmJ then accepts both 3-hydroxypentacecilide A and chrodrimanin C and functions as a C-7-beta-hydroxylase to produce respectively chrodrimanin H and chrodrimanin F. The dioxygenase cdmA accepts chrodrimanin H to afford chrodrimanin E, which is further transformed to chrodrimanin A by the dioxygenase cdmD. CdmA can also accept chrodrimanin C as substrate to convert it into verruculide A, which is further converted into chrodrimanin T by cdmD. The last step of the biosynthesis is proposed to be performed by the acetyltransferase cdmC which acetylates chrodrimanin A to yield chrodrimanin B. The pathway may also lead to the production of additional shunt products, including chrodrimanins T and U. This Talaromyces verruculosus (Penicillium verruculosum) protein is Dioxygenase cdmA.